Reading from the N-terminus, the 407-residue chain is uncharacterized protein (407 aa).

Positions 10–37 form a coiled coil; it reads DKLEQLANDVVTELTDMENKYKDLHVEL.

This is an uncharacterized protein from Bacillus subtilis (strain 168).